The chain runs to 60 residues: UPF0434 protein Aave_2563 (60 aa).

It belongs to the UPF0434 family.

The sequence is that of UPF0434 protein Aave_2563 from Paracidovorax citrulli (strain AAC00-1) (Acidovorax citrulli).